A 298-amino-acid polypeptide reads, in one-letter code: Iron-regulated virulence regulatory protein IrgB (298 aa).

Residues 1 to 59 (MQDLSAVKAFHALCQHKSLTAAAKALEQPKSTLSRRLAQLEEDLGQSLLMRQGNRLTLT) form the HTH lysR-type domain. The segment at residues 19 to 38 (LTAAAKALEQPKSTLSRRLA) is a DNA-binding region (H-T-H motif).

This sequence belongs to the LysR transcriptional regulatory family.

Transcription activation of the irgA gene. In the presence of sufficient iron, transcription of both irgA and irgB is negatively regulated by a fur-like protein. In low iron conditions, negative regulation of transcription is removed, and production of irgB leads to positive transcriptional activation of irgA. The protein is Iron-regulated virulence regulatory protein IrgB (irgB) of Vibrio cholerae serotype O1 (strain ATCC 39315 / El Tor Inaba N16961).